A 619-amino-acid polypeptide reads, in one-letter code: Dynein axonemal intermediate chain 2 (619 aa).

WD repeat units lie at residues 214 to 254, 261 to 302, 362 to 401, 405 to 445, and 450 to 489; these read KPSS…LVAE, SHRD…EPTE, GHHGPIYALQRNPFYPKNFLTVGDWAARIWSEESRESSIM, YHMA…CDPA, and VCDDPLFCLRVQDTGCLIACGSELGTTTLLEVSSSLSTLQ. Residues 566–619 form a disordered region; it reads EALKKKPKPKKASIEVEGEDELEDIAGEEEESGIIMGEDTGEDDMDEKNEGGAP. Residues 581–597 are compositionally biased toward acidic residues; that stretch reads VEGEDELEDIAGEEEES.

This sequence belongs to the dynein intermediate chain family. In terms of assembly, consists of at least two heavy chains and a number of intermediate and light chains. Interacts with DNAAF2. Interacts with DNAAF6/PIH1D3. Interacts with HEATR2; probably involved in outer arm dynein assembly. Interacts with CFAP53.

It is found in the cytoplasm. The protein resides in the cytoskeleton. Its subcellular location is the cilium axoneme. The protein localises to the dynein axonemal particle. In terms of biological role, part of the dynein complex of respiratory cilia. The sequence is that of Dynein axonemal intermediate chain 2 (Dnai2) from Rattus norvegicus (Rat).